Reading from the N-terminus, the 1828-residue chain is InaD-like protein (1828 aa).

The L27 domain maps to 5–65; the sequence is PAPDKLQVLQ…SIKQLKGQLS (61 aa). PDZ domains are found at residues 134–221, 248–328, and 365–453; these read YIDI…AREP, DVEL…ARDP, and GVEL…VRRK. Phosphoserine is present on residues Ser459 and Ser522. Residues 553 to 639 form the PDZ 4 domain; that stretch reads DAELQKYSKL…PFTLVCCRRL (87 aa). The residue at position 645 (Ser645) is a Phosphoserine. 2 PDZ domains span residues 686 to 758 and 1070 to 1162; these read IVEL…EVLK and IVEI…QSLS. The segment at 1168 to 1220 is disordered; the sequence is IPSVHNKANKIANNQDQNTEEKKEKRQGTPPPPMKLPPPYKAPSDDSDENEEE. Over residues 1196–1208 the composition is skewed to pro residues; the sequence is TPPPPMKLPPPYK. Position 1211 is a phosphoserine (Ser1211). One can recognise a PDZ 7 domain in the interval 1241–1324; it reads IIELEKDKNG…KVKLVFIRNE (84 aa). A disordered region spans residues 1333 to 1362; it reads APFPVPSSSPSSLEDQSGTEPVSSEEDGSL. Residues 1345–1354 are compositionally biased toward polar residues; sequence LEDQSGTEPV. 2 consecutive PDZ domains span residues 1464 to 1547 and 1560 to 1642; these read IIEI…YRDE and PVDL…GRLR. Residue Thr1535 is modified to Phosphothreonine. The span at 1645–1668 shows a compositional bias: polar residues; that stretch reads SWTSSRKTSQNSQGSQHSTHSSFH. The interval 1645–1669 is disordered; the sequence is SWTSSRKTSQNSQGSQHSTHSSFHP. One can recognise a PDZ 10 domain in the interval 1703–1789; that stretch reads TVEIIRELSD…RIILQVVADT (87 aa). The disordered stretch occupies residues 1805–1828; the sequence is YHLGSPTAEHHPEDTEEPLQMTAG.

As to quaternary structure, forms a ternary complex with PALS1 and CRB1. Component of a complex whose core is composed of ARHGAP17, AMOT, PALS1, INADL/PATJ and PARD3/PAR3. Forms a heterotrimeric complex composed of MMP5, LIN7B and PATJ; the N-terminal L27 domain of PALS1 interacts with the L27 domain of PATJ and the C-terminal L27 domain of PALS1 interacts with the L27 domain of LIN7B. Component of a complex composed of CRB3, PALS1 and PATJ. As part of the Crumbs complex; interacts with WWP1, the interaction is enhanced by AMOTL2 and facilitates WWP1 localization to the plasma membrane. The Crumbs complex promotes monoubiquitination of AMOTL2 by WWP1, which activates the Hippo signaling pathway. Interacts (via N-terminus) with PALS1/PALS (via PDZ domain). Interacts with TJP3/ZO-3 and CLDN1/claudin-1. Interacts with ASIC3, KCNJ10, KCNJ15, GRIN2A, GRIN2B, GRIN2C, GRIN2D, NLGN2, and HTR2A. Interacts with MPP7. Directly interacts with HTR4. Interacts (via PDZ domain 8) with WWC1 (via the ADDV motif). Interacts with SLC6A4. Interacts (via C-terminus) with ARHGEF18. Interacts with NPHP1. Interacts with PARD3/PAR3. Interacts (via PDZ1-6 domains) with TJP1/ZO1; the interaction is required for attachment and extension of TJP1/ZO1 condensates along the apical cell interface.

It is found in the cell junction. The protein localises to the tight junction. Its subcellular location is the apical cell membrane. It localises to the cytoplasm. The protein resides in the perinuclear region. Scaffolding protein that facilitates the localization of proteins to the cell membrane. Required for the correct formation of tight junctions and epithelial apico-basal polarity. Acts (via its L27 domain) as an apical connector and elongation factor for multistranded TJP1/ZO1 condensates that form a tight junction belt, thereby required for the formation of the tight junction-mediated cell barrier. Positively regulates epithelial cell microtubule elongation and cell migration, possibly via facilitating localization of PRKCI/aPKC and PAR3D/PAR3 at the leading edge of migrating cells. Plays a role in the correct reorientation of the microtubule-organizing center during epithelial migration. May regulate the surface expression and/or function of ASIC3 in sensory neurons. May recruit ARHGEF18 to apical cell-cell boundaries. This chain is InaD-like protein, found in Canis lupus familiaris (Dog).